The sequence spans 266 residues: Outer membrane protein OmpK (266 aa).

An N-terminal signal peptide occupies residues 1–20 (MRKSLLALSLLAATSAPVLA).

Belongs to the nucleoside-specific channel-forming outer membrane porin (Tsx) (TC 1.B.10) family.

The protein resides in the cell outer membrane. Functionally, serves as receptor for a broad-host-range vibriophage, KVP40. The sequence is that of Outer membrane protein OmpK (ompK) from Vibrio parahaemolyticus serotype O3:K6 (strain RIMD 2210633).